Here is a 382-residue protein sequence, read N- to C-terminus: Ubiquitin-like protease 4 (382 aa).

Residues 46 to 106 (GTHLDGSIGE…DNDEWTNQKR (61 aa)) are disordered. Residues 84-100 (DLVDEDEEEEDEEDNDE) show a composition bias toward acidic residues.

The protein belongs to the peptidase C48 family. Expressed in hermaphrodite-specific neurons, head muscles, body wall muscles and pharyngeal cells.

It localises to the cytoplasm. The protein localises to the cytoskeleton. It is found in the microtubule organizing center. The protein resides in the centrosome. Its subcellular location is the nucleus. It localises to the mitochondrion matrix. It participates in protein modification; protein sumoylation. Functionally, protease required for deconjugation of smo-1 conjugates from target proteins which is necessary for cell cycle progression. Required for respiration and the maintenance of normal mitochondrial homeostasis. In response to mitochondrial stress, required for the removal of smo-1 conjugates from the transcription factor dve-1, which promotes the translocation of dve-1 from the cytosol to the nucleus to initiate the mitochondrial unfolded protein response. Furthermore, removes the smo-1 conjugates from the transcription factor atfs-1 to promote its stability and activate the mitochondrial unfolded protein response. Also plays a role in promoting mitochondrial unfolded protein response-mediated innate immunity following infection with P.aeruginosa. This Caenorhabditis elegans protein is Ubiquitin-like protease 4.